The sequence spans 228 residues: Protein boule (228 aa).

In terms of domain architecture, RRM spans 33-110; that stretch reads NRIFVGGISG…RKLNIAPAIK (78 aa). Residues 151–178 form the DAZ domain; the sequence is PAAGVPAIYPPSAMQYQPFYQYYSVPMN. The span at 193 to 214 shows a compositional bias: low complexity; that stretch reads PLLHSPTSNPHSPHSQSHPQSP. Positions 193–228 are disordered; that stretch reads PLLHSPTSNPHSPHSQSHPQSPCWSIEDLRDTLPRV. Over residues 219–228 the composition is skewed to basic and acidic residues; that stretch reads EDLRDTLPRV.

It belongs to the RRM DAZ family. In terms of assembly, interacts with the translational regulator orb2. As to expression, testis specific.

Its subcellular location is the nucleus. The protein localises to the cytoplasm. Its function is as follows. RNA-binding protein that plays a central role in spermatogenesis. Required for meiotic entry and germline differentiation, at the transition between G2 and M phases of meiosis I. Acts by regulating translation of specific mRNAs, possibly by binding to their 3'-UTR. Essential for translation of twine (twe) mRNA. Required for the expression of various genes such as CG6784, CG17210, CG15841 scpr-B, scpr-C, and rho-6. The polypeptide is Protein boule (bol) (Drosophila melanogaster (Fruit fly)).